Reading from the N-terminus, the 643-residue chain is Sodium/iodide cotransporter (643 aa).

Over 1–14 the chain is Extracellular; it reads MEAVETGERPTFGA. Residues 15 to 31 traverse the membrane as a helical segment; it reads WDYGVFALMLLVSTGIG. The Cytoplasmic portion of the chain corresponds to 32 to 56; the sequence is LWVGLARGGQRSAEDFFTGGRRLAA. Residues 57–80 traverse the membrane as a discontinuously helical segment; that stretch reads LPVGLSLSASFMSAVQVLGVPSEA. Residues Ser69, Val71, and Gln72 each coordinate Na(+). Val76 contributes to the iodide binding site. At 81–84 the chain is on the extracellular side; the sequence is YRYG. The chain crosses the membrane as a helical span at residues 85 to 105; that stretch reads LKFLWMCLGQLLNSVLTALLF. Met90 serves as a coordination point for iodide. The Cytoplasmic portion of the chain corresponds to 106 to 130; the sequence is MPVFYRLGLTSTYEYLEMRFSRAVR. The chain crosses the membrane as a helical span at residues 131 to 157; that stretch reads LCGTLQYIVATMLYTGIVIYAPALILN. A Na(+)-binding site is contributed by Tyr144. Over 158–163 the chain is Extracellular; it reads QVTGLD. A helical transmembrane segment spans residues 164 to 181; the sequence is IWASLLSTGIICTFYTAV. At 182-189 the chain is on the cytoplasmic side; that stretch reads GGMKAVVW. Residues 190–208 traverse the membrane as a helical segment; it reads TDVFQVVVMLSGFWVVLAR. Residues 209–243 are Extracellular-facing; the sequence is GVMLVGGPRQVLTLAQNHSRINLMDFNPDPRSRYT. A discontinuously helical transmembrane segment spans residues 244 to 266; it reads FWTFVVGGTLVWLSMYGVNQAQV. Trp255 serves as a coordination point for iodide. Position 258 (Met258) interacts with Na(+). Residues 267-278 are Cytoplasmic-facing; it reads QRYVACRTEKQA. Residues 279–301 form a helical membrane-spanning segment; sequence KLALLINQVGLFLIVSSAACCGI. Over 302–335 the chain is Extracellular; that stretch reads VMFVFYTDCDPLLLGRISAPDQYMPLLVLDIFED. Residues 336–363 form a helical membrane-spanning segment; the sequence is LPGVPGLFLACAYSGTLSTASTSINAMA. At 364–386 the chain is on the cytoplasmic side; it reads AVTVEDLIKPRLRSLAPRKLVII. A helical membrane pass occupies residues 387–408; the sequence is SKGLSLIYGSACLTVAALSSLL. At 409 to 411 the chain is on the extracellular side; sequence GGG. A helical membrane pass occupies residues 412 to 437; it reads VLQGSFTVMGVISGPLLGAFILGMFL. Residue Leu413 participates in iodide binding. Residues Ser416 and Phe417 each contribute to the Na(+) site. Phe417 serves as a coordination point for iodide. The Cytoplasmic portion of the chain corresponds to 438-441; that stretch reads PACN. Residues 442–465 traverse the membrane as a helical segment; that stretch reads TPGVLAGLGAGLALSLWVALGATL. At 466–525 the chain is on the extracellular side; that stretch reads YPPSEQTMRVLPSSAARCVALSVNASGLLDPALLPANDSSRAPSSGMDASRPALADSFYA. N-linked (GlcNAc...) asparagine glycosylation is found at Asn489 and Asn502. A helical membrane pass occupies residues 526 to 550; it reads ISYLYYGALGTLTTVLCGALISCLT. The Cytoplasmic portion of the chain corresponds to 551 to 643; that stretch reads GPTKRSTLAP…GGRDQQETNL (93 aa). Ser556 carries the phosphoserine; by PKA modification. The tract at residues 623–643 is disordered; the sequence is AGSWTPCVGHDGGRDQQETNL. A compositionally biased stretch (basic and acidic residues) spans 633-643; sequence DGGRDQQETNL.

The protein belongs to the sodium:solute symporter (SSF) (TC 2.A.21) family. In terms of assembly, monomer. In terms of processing, glycosylated. Expression is primarily in thyroid tissue, but also to a lower extent in mammary gland and ovary. Expression is reduced in tumors.

It localises to the cell membrane. Its subcellular location is the cytoplasm. It catalyses the reaction iodide(out) + 2 Na(+)(out) = iodide(in) + 2 Na(+)(in). It carries out the reaction chlorate(out) + 2 Na(+)(out) = chlorate(in) + 2 Na(+)(in). The enzyme catalyses thiocyanate(out) + 2 Na(+)(out) = thiocyanate(in) + 2 Na(+)(in). The catalysed reaction is nitrate(out) + 2 Na(+)(out) = nitrate(in) + 2 Na(+)(in). It catalyses the reaction selenocyanate(out) + 2 Na(+)(out) = selenocyanate(in) + 2 Na(+)(in). With respect to regulation, dysidenin and perchlorate inhibit iodide transport activity. Oxyanions inhibit iodide transport activity by blocking the binding sites for iodide and one of the sodium ions. Sodium:iodide symporter that mediates the transport of iodide into the thyroid gland. Can also mediate the transport of chlorate, thiocynate, nitrate and selenocynate. The protein is Sodium/iodide cotransporter (SLC5A5) of Homo sapiens (Human).